The chain runs to 105 residues: Flagellar transcriptional regulator FlhD (105 aa).

This sequence belongs to the FlhD family. Homodimer; disulfide-linked. Forms a heterohexamer composed of two FlhC and four FlhD subunits. Each FlhC binds a FlhD dimer, forming a heterotrimer, and a hexamer assembles by dimerization of two heterotrimers.

The protein resides in the cytoplasm. Functionally, functions in complex with FlhC as a master transcriptional regulator that regulates transcription of several flagellar and non-flagellar operons by binding to their promoter region. Activates expression of class 2 flagellar genes, including fliA, which is a flagellum-specific sigma factor that turns on the class 3 genes. Also regulates genes whose products function in a variety of physiological pathways. This Ralstonia nicotianae (strain ATCC BAA-1114 / GMI1000) (Ralstonia solanacearum) protein is Flagellar transcriptional regulator FlhD.